The following is a 346-amino-acid chain: Dihydroorotase (346 aa).

Positions 14 and 16 each coordinate Zn(2+). Substrate-binding positions include 16 to 18 (HLR) and Asn-42. Positions 100, 137, and 175 each coordinate Zn(2+). Lys-100 is modified (N6-carboxylysine). Substrate is bound at residue His-137. Substrate is bound at residue Leu-220. Asp-248 is a binding site for Zn(2+). Asp-248 is a catalytic residue. Residues His-252 and Ala-264 each contribute to the substrate site.

The protein belongs to the metallo-dependent hydrolases superfamily. DHOase family. Class II DHOase subfamily. Homodimer. It depends on Zn(2+) as a cofactor.

It catalyses the reaction (S)-dihydroorotate + H2O = N-carbamoyl-L-aspartate + H(+). The protein operates within pyrimidine metabolism; UMP biosynthesis via de novo pathway; (S)-dihydroorotate from bicarbonate: step 3/3. Its function is as follows. Catalyzes the reversible cyclization of carbamoyl aspartate to dihydroorotate. The polypeptide is Dihydroorotase (Novosphingobium aromaticivorans (strain ATCC 700278 / DSM 12444 / CCUG 56034 / CIP 105152 / NBRC 16084 / F199)).